Consider the following 292-residue polypeptide: 4-hydroxy-tetrahydrodipicolinate synthase (292 aa).

Threonine 45 lines the pyruvate pocket. Tyrosine 133 (proton donor/acceptor) is an active-site residue. The active-site Schiff-base intermediate with substrate is lysine 161. Isoleucine 203 serves as a coordination point for pyruvate.

This sequence belongs to the DapA family. In terms of assembly, homotetramer; dimer of dimers.

The protein localises to the cytoplasm. It catalyses the reaction L-aspartate 4-semialdehyde + pyruvate = (2S,4S)-4-hydroxy-2,3,4,5-tetrahydrodipicolinate + H2O + H(+). Its pathway is amino-acid biosynthesis; L-lysine biosynthesis via DAP pathway; (S)-tetrahydrodipicolinate from L-aspartate: step 3/4. Catalyzes the condensation of (S)-aspartate-beta-semialdehyde [(S)-ASA] and pyruvate to 4-hydroxy-tetrahydrodipicolinate (HTPA). This Azoarcus sp. (strain BH72) protein is 4-hydroxy-tetrahydrodipicolinate synthase.